The primary structure comprises 232 residues: Ion-translocating oxidoreductase complex subunit E (232 aa).

Transmembrane regions (helical) follow at residues 39 to 59, 69 to 89, 93 to 113, 128 to 148, and 182 to 202; these read LGLGIATMLVLIGSNVLISLV, IPVFVMIIAALVTAVQLLVNA, GLYMSLGIFLPLIVTNCIIIG, AFDGLMMGLGFTLVLVLLGAT, and SFLLAMLPPGAFIVMGLLIAL.

The protein belongs to the NqrDE/RnfAE family. In terms of assembly, the complex is composed of six subunits: RnfA, RnfB, RnfC, RnfD, RnfE and RnfG.

Its subcellular location is the cell inner membrane. Its function is as follows. Part of a membrane-bound complex that couples electron transfer with translocation of ions across the membrane. The chain is Ion-translocating oxidoreductase complex subunit E from Shewanella oneidensis (strain ATCC 700550 / JCM 31522 / CIP 106686 / LMG 19005 / NCIMB 14063 / MR-1).